Reading from the N-terminus, the 359-residue chain is 3-dehydroquinate synthase (359 aa).

NAD(+)-binding positions include 69 to 74 (DAEDGK), 103 to 107 (GAVTD), 127 to 128 (TT), Lys140, and Lys149. 3 residues coordinate Zn(2+): Glu182, His244, and His260.

The protein belongs to the sugar phosphate cyclases superfamily. Dehydroquinate synthase family. NAD(+) serves as cofactor. It depends on Co(2+) as a cofactor. Zn(2+) is required as a cofactor.

It is found in the cytoplasm. The catalysed reaction is 7-phospho-2-dehydro-3-deoxy-D-arabino-heptonate = 3-dehydroquinate + phosphate. It functions in the pathway metabolic intermediate biosynthesis; chorismate biosynthesis; chorismate from D-erythrose 4-phosphate and phosphoenolpyruvate: step 2/7. Its function is as follows. Catalyzes the conversion of 3-deoxy-D-arabino-heptulosonate 7-phosphate (DAHP) to dehydroquinate (DHQ). In Corynebacterium pseudotuberculosis (strain C231), this protein is 3-dehydroquinate synthase.